The sequence spans 123 residues: Small ribosomal subunit protein uS12 (123 aa).

Residues 1-22 are disordered; sequence MATINQLVRQPRKRSVEKSDVP. At Asp-89 the chain carries 3-methylthioaspartic acid. The tract at residues 100–123 is disordered; that stretch reads GSLDTSGVKGRNQGRSKYGTKRPK. Over residues 111 to 123 the composition is skewed to basic residues; sequence NQGRSKYGTKRPK.

The protein belongs to the universal ribosomal protein uS12 family. As to quaternary structure, part of the 30S ribosomal subunit. Contacts proteins S8 and S17. May interact with IF1 in the 30S initiation complex.

Its function is as follows. With S4 and S5 plays an important role in translational accuracy. Functionally, interacts with and stabilizes bases of the 16S rRNA that are involved in tRNA selection in the A site and with the mRNA backbone. Located at the interface of the 30S and 50S subunits, it traverses the body of the 30S subunit contacting proteins on the other side and probably holding the rRNA structure together. The combined cluster of proteins S8, S12 and S17 appears to hold together the shoulder and platform of the 30S subunit. The polypeptide is Small ribosomal subunit protein uS12 (Pseudomonas entomophila (strain L48)).